We begin with the raw amino-acid sequence, 190 residues long: Glucose-6-phosphate isomerase (190 aa).

Positions 89, 91, 98, and 137 each coordinate Fe cation.

This sequence belongs to the archaeal-type GPI family. Homodimer. The cofactor is Fe cation.

The protein localises to the cytoplasm. The catalysed reaction is alpha-D-glucose 6-phosphate = beta-D-fructose 6-phosphate. Its pathway is carbohydrate degradation; glycolysis; D-glyceraldehyde 3-phosphate and glycerone phosphate from D-glucose: step 2/4. Inhibited by mannose 6-phosphate, fructose 1-phosphate and fructose 1,6-bisphosphate. Its activity is also inhibited by Cobalt (II) ions &lt; EDTA &lt; nickel (II) ions &lt; zinc (II) ions &lt;&lt; cadmium (II) ions &lt; copper (II) ions. Sodium and potassium ions and manganese ions show little or no effect on activity. This Thermococcus litoralis protein is Glucose-6-phosphate isomerase (pgiA).